The chain runs to 204 residues: Large ribosomal subunit protein uL4 (204 aa).

The segment at 49–90 (KVKGMGEVSGTTKKPYRQKGTGSARQGSLRAPQYRTGGAVHG) is disordered.

It belongs to the universal ribosomal protein uL4 family. As to quaternary structure, part of the 50S ribosomal subunit.

In terms of biological role, one of the primary rRNA binding proteins, this protein initially binds near the 5'-end of the 23S rRNA. It is important during the early stages of 50S assembly. It makes multiple contacts with different domains of the 23S rRNA in the assembled 50S subunit and ribosome. Its function is as follows. Forms part of the polypeptide exit tunnel. In Gluconacetobacter diazotrophicus (strain ATCC 49037 / DSM 5601 / CCUG 37298 / CIP 103539 / LMG 7603 / PAl5), this protein is Large ribosomal subunit protein uL4.